The chain runs to 168 residues: Ribosome maturation factor RimM (168 aa).

In terms of domain architecture, PRC barrel spans 94–167 (DGNYYHHQII…KVIIELLDGL (74 aa)).

It belongs to the RimM family. In terms of assembly, binds ribosomal protein uS19.

The protein localises to the cytoplasm. Its function is as follows. An accessory protein needed during the final step in the assembly of 30S ribosomal subunit, possibly for assembly of the head region. Essential for efficient processing of 16S rRNA. May be needed both before and after RbfA during the maturation of 16S rRNA. It has affinity for free ribosomal 30S subunits but not for 70S ribosomes. This is Ribosome maturation factor RimM from Ligilactobacillus salivarius (strain UCC118) (Lactobacillus salivarius).